The chain runs to 151 residues: Cytochrome c-type biogenesis protein CcmE (151 aa).

At 1–8 (MNPLRRKR) the chain is on the cytoplasmic side. The helical; Signal-anchor for type II membrane protein transmembrane segment at 9 to 29 (LLIILAILVGVGVAVGLALSA) threads the bilayer. Over 30-151 (LQQNINLFYT…QSAPTPAKEG (122 aa)) the chain is Periplasmic. Heme-binding residues include H124 and Y128.

This sequence belongs to the CcmE/CycJ family.

It is found in the cell inner membrane. Its function is as follows. Heme chaperone required for the biogenesis of c-type cytochromes. Transiently binds heme delivered by CcmC and transfers the heme to apo-cytochromes in a process facilitated by CcmF and CcmH. The sequence is that of Cytochrome c-type biogenesis protein CcmE from Pseudomonas fluorescens biotype C.